Here is a 326-residue protein sequence, read N- to C-terminus: Virulence factor CaO19.6688 (326 aa).

Disordered stretches follow at residues 19 to 91, 112 to 137, 161 to 184, 222 to 245, and 276 to 326; these read FNSL…KLPS, EEDN…GTTK, NTTI…PSFP, NVGQ…NDLL, and YEYG…PKIK. Low complexity-rich tracts occupy residues 21–42, 53–78, and 117–137; these read SLKS…SSSS, NRNT…NTTP, and EQQL…GTTK.

In terms of biological role, virulence factor involved in pathogen-host interaction. Modulates host pro-inflammatory cytokine interleukin-1 beta (IL1B) expression. This is Virulence factor CaO19.6688 from Candida albicans (strain SC5314 / ATCC MYA-2876) (Yeast).